The primary structure comprises 836 residues: Zinc fingers and homeoboxes protein 2 (836 aa).

The disordered stretch occupies residues 1–61; that stretch reads MASKRKSTTP…EHSSKETEVV (61 aa). Over residues 8–19 the composition is skewed to polar residues; that stretch reads TTPCMVRTSQVL. The interaction with EFNB1 stretch occupies residues 27–77; sequence ADRAKDKGAGMPQSDVTKDSWAAEPEHSSKETEVVEVKSMGENLSKKLQGG. The span at 50–61 shows a compositional bias: basic and acidic residues; it reads EPEHSSKETEVV. Lys64 participates in a covalent cross-link: Glycyl lysine isopeptide (Lys-Gly) (interchain with G-Cter in SUMO2). C2H2-type zinc fingers lie at residues 78 to 101 and 110 to 133; these read YECK…DMQH and YVCA…SKFH. Positions 164-214 are disordered; the sequence is PITASGPGSSDNDPGVSVGKTPMTKTGKLKADAKKVPKKPDEAAPENHMEG. Over residues 192 to 214 the composition is skewed to basic and acidic residues; sequence LKADAKKVPKKPDEAAPENHMEG. The required for homodimerization stretch occupies residues 195–358; the sequence is DAKKVPKKPD…PAQLTPTKVS (164 aa). 4 DNA-binding regions (homeobox) span residues 263–324, 439–501, 530–591, and 628–690; these read NTTK…WSPE, TPAS…IVHI, PQKF…EQAV, and SPSS…TLSW. A required for repressor activity region spans residues 263–446; sequence NTTKYNSALD…PLTPASDRKK (184 aa). The required for interaction with NFYA stretch occupies residues 263–497; that stretch reads NTTKYNSALD…SDHRYRCQRG (235 aa). Positions 317–446 are required for nuclear localization; sequence HGISWSPEEV…PLTPASDRKK (130 aa). Residues 404–442 form a disordered region; that stretch reads GQKRPLVTPQAAPEPKRPHIAQVPEPPPKVANTPLTPAS. Lys455 participates in a covalent cross-link: Glycyl lysine isopeptide (Lys-Gly) (interchain with G-Cter in SUMO2). Basic and acidic residues-rich tracts occupy residues 699-709, 730-746, and 813-824; these read MSDDRGRDAVS, YAKD…EKLV, and RVAEGTVERADS. The interval 699 to 836 is disordered; that stretch reads MSDDRGRDAV…DSTPAEAGQA (138 aa). 2 positions are modified to phosphoserine: Ser824 and Ser826.

Belongs to the ZHX family. As to quaternary structure, homodimer (via homeobox domain 1). Heterodimer with ZHX1 (via homeobox domain 1). Heterodimer with ZHX3 (via homeobox domain 1). Heterodimerization with ZHX1 is not necessary for repressor activity. Interacts (via homeobox domain) with NFYA (via N-terminus). Interacts with EFNB1 intracellular domain peptide; the interaction enhances ZHX2 transcriptional repression activity. Expressed in retina where it localizes to Muller glial cells of the inner nuclear layer (at protein level). Detected in heart, brain, spleen, lung, liver, skeletal muscle, kidney and testis.

The protein resides in the nucleus. In terms of biological role, acts as a transcriptional repressor. Represses the promoter activity of the CDC25C gene stimulated by NFYA. May play a role in retinal development where it regulates the composition of bipolar cell populations, by promoting differentiation of bipolar OFF-type cells. In the brain, may promote maintenance and suppress differentiation of neural progenitor cells in the developing cortex. This is Zinc fingers and homeoboxes protein 2 (Zhx2) from Mus musculus (Mouse).